A 953-amino-acid polypeptide reads, in one-letter code: Glycine dehydrogenase (decarboxylating) (953 aa).

Lysine 705 carries the N6-(pyridoxal phosphate)lysine modification.

Belongs to the GcvP family. The glycine cleavage system is composed of four proteins: P, T, L and H. It depends on pyridoxal 5'-phosphate as a cofactor.

The catalysed reaction is N(6)-[(R)-lipoyl]-L-lysyl-[glycine-cleavage complex H protein] + glycine + H(+) = N(6)-[(R)-S(8)-aminomethyldihydrolipoyl]-L-lysyl-[glycine-cleavage complex H protein] + CO2. Its function is as follows. The glycine cleavage system catalyzes the degradation of glycine. The P protein binds the alpha-amino group of glycine through its pyridoxal phosphate cofactor; CO(2) is released and the remaining methylamine moiety is then transferred to the lipoamide cofactor of the H protein. This is Glycine dehydrogenase (decarboxylating) from Sodalis glossinidius (strain morsitans).